The sequence spans 303 residues: Ribonuclease Z (303 aa).

Histidine 61, histidine 63, aspartate 65, histidine 66, histidine 138, aspartate 206, and histidine 265 together coordinate Zn(2+). Catalysis depends on aspartate 65, which acts as the Proton acceptor.

This sequence belongs to the RNase Z family. Homodimer. Zn(2+) is required as a cofactor.

It catalyses the reaction Endonucleolytic cleavage of RNA, removing extra 3' nucleotides from tRNA precursor, generating 3' termini of tRNAs. A 3'-hydroxy group is left at the tRNA terminus and a 5'-phosphoryl group is left at the trailer molecule.. In terms of biological role, zinc phosphodiesterase, which displays some tRNA 3'-processing endonuclease activity. Probably involved in tRNA maturation, by removing a 3'-trailer from precursor tRNA. This chain is Ribonuclease Z, found in Agathobacter rectalis (strain ATCC 33656 / DSM 3377 / JCM 17463 / KCTC 5835 / VPI 0990) (Eubacterium rectale).